Here is a 294-residue protein sequence, read N- to C-terminus: UDP-3-O-acyl-N-acetylglucosamine deacetylase (294 aa).

Zn(2+)-binding residues include His-75, His-232, and Asp-236. Residue His-259 is the Proton donor of the active site.

This sequence belongs to the LpxC family. Zn(2+) is required as a cofactor.

The catalysed reaction is a UDP-3-O-[(3R)-3-hydroxyacyl]-N-acetyl-alpha-D-glucosamine + H2O = a UDP-3-O-[(3R)-3-hydroxyacyl]-alpha-D-glucosamine + acetate. Its pathway is glycolipid biosynthesis; lipid IV(A) biosynthesis; lipid IV(A) from (3R)-3-hydroxytetradecanoyl-[acyl-carrier-protein] and UDP-N-acetyl-alpha-D-glucosamine: step 2/6. Its function is as follows. Catalyzes the hydrolysis of UDP-3-O-myristoyl-N-acetylglucosamine to form UDP-3-O-myristoylglucosamine and acetate, the committed step in lipid A biosynthesis. The protein is UDP-3-O-acyl-N-acetylglucosamine deacetylase of Campylobacter jejuni subsp. jejuni serotype O:6 (strain 81116 / NCTC 11828).